The sequence spans 1613 residues: MGAVLRSLLACSFCVLLRAAPLLLYANRRDLRLVDATNGKENATIVVGGLEDAAAVDFVFSHGLIYWSDVSEEAIKRTEFNKTESVQNVVVSGLLSPDGLACDWLGEKLYWTDSETNRIEVSNLDGSLRKVLFWQELDQPRAIALDPSSGFMYWTDWGEVPKIERAGMDGSSRFIIINSEIYWPNGLTLDYEEQKLYWADAKLNFIHKSNLDGTNRQAVVKGSLPHPFALTLFEDILYWTDWSTHSILACNKYTGEGLREIHSDIFSPMDIHAFSQQRQPNATNPCGIDNGGCSHLCLMSPVKPFYQCACPTGVKLLENGKTCKDGATELLLLARRTDLRRISLDTPDFTDIVLQLEDIRHAIAIDYDPVEGYIYWTDDEVRAIRRSFIDGSGSQFVVTAQIAHPDGIAVDWVARNLYWTDTGTDRIEVTRLNGTMRKILISEDLEEPRAIVLDPMVGYMYWTDWGEIPKIERAALDGSDRVVLVNTSLGWPNGLALDYDEGKIYWGDAKTDKIEVMNTDGTGRRVLVEDKIPHIFGFTLLGDYVYWTDWQRRSIERVHKRSAEREVIIDQLPDLMGLKATNVHRVIGSNPCAEENGGCSHLCLYRPQGLRCACPIGFELISDMKTCIVPEAFLLFSRRADIRRISLETNNNNVAIPLTGVKEASALDFDVTDNRIYWTDISLKTISRAFMNGSALEHVVEFGLDYPEGMAVDWLGKNLYWADTGTNRIEVSKLDGQHRQVLVWKDLDSPRALALDPAEGFMYWTEWGGKPKIDRAAMDGSERTTLVPNVGRANGLTIDYAKRRLYWTDLDTNLIESSNMLGLNREVIADDLPHPFGLTQYQDYIYWTDWSRRSIERANKTSGQNRTIIQGHLDYVMDILVFHSSRQSGWNECASSNGHCSHLCLAVPVGGFVCGCPAHYSLNADNRTCSAPTTFLLFSQKSAINRMVIDEQQSPDIILPIHSLRNVRAIDYDPLDKQLYWIDSRQNMIRKAQEDGSQGFTVVVSSVPSQNLEIQPYDLSIDIYSRYIYWTCEATNVINVTRLDGRSVGVVLKGEQDRPRAVVVNPEKGYMYFTNLQERSPKIERAALDGTEREVLFFSGLSKPIALALDSRLGKLFWADSDLRRIESSDLSGANRIVLEDSNILQPVGLTVFENWLYWIDKQQQMIEKIDMTGREGRTKVQARIAQLSDIHAVKELNLQEYRQHPCAQDNGGCSHICLVKGDGTTRCSCPMHLVLLQDELSCGEPPTCSPQQFTCFTGEIDCIPVAWRCDGFTECEDHSDELNCPVCSESQFQCASGQCIDGALRCNGDANCQDKSDEKNCEVLCLIDQFRCANGQCIGKHKKCDHNVDCSDKSDELDCYPTEEPAPQATNTVGSVIGVIVTIFVSGTVYFICQRMLCPRMKGDGETMTNDYVVHGPASVPLGYVPHPSSLSGSLPGMSRGKSMISSLSIMGGSSGPPYDRAHVTGASSSSSSSTKGTYFPAILNPPPSPATERSHYTMEFGYSSNSPSTHRSYSYRPYSYRHFAPPTTPCSTDVCDSDYAPSRRMTSVATAKGYTSDLNYDSEPVPPPPTPRSQYLSAEENYESCPPSPYTERSYSHHLYPPPPSPCTDSS.

Residues 1-19 (MGAVLRSLLACSFCVLLRA) form the signal peptide. A beta-propeller 1 region spans residues 20 to 275 (APLLLYANRR…FSPMDIHAFS (256 aa)). The Extracellular portion of the chain corresponds to 20–1370 (APLLLYANRR…YPTEEPAPQA (1351 aa)). Asparagine 42 and asparagine 81 each carry an N-linked (GlcNAc...) asparagine glycan. 5 LDL-receptor class B repeats span residues 63 to 106 (GLIY…DWLG), 107 to 149 (EKLY…DPSS), 150 to 193 (GFMY…DYEE), 194 to 236 (QKLY…FEDI), and 237 to 276 (LYWT…AFSQ). Residue asparagine 281 is glycosylated (N-linked (GlcNAc...) asparagine). The region spanning 282 to 324 (ATNPCGIDNGGCSHLCLMSPVKPFYQCACPTGVKLLENGKTCK) is the EGF-like 1 domain. 3 cysteine pairs are disulfide-bonded: cysteine 286/cysteine 297, cysteine 293/cysteine 308, and cysteine 310/cysteine 323. A beta-propeller 2 region spans residues 328–589 (TELLLLARRT…ATNVHRVIGS (262 aa)). 5 LDL-receptor class B repeats span residues 372 to 414 (GYIY…DWVA), 415 to 457 (RNLY…DPMV), 458 to 501 (GYMY…DYDE), 502 to 542 (GKIY…TLLG), and 543 to 584 (DYVY…TNVH). N-linked (GlcNAc...) asparagine glycosylation is found at asparagine 433 and asparagine 486. The EGF-like 2 domain occupies 588–628 (GSNPCAEENGGCSHLCLYRPQGLRCACPIGFELISDMKTCI). Cystine bridges form between cysteine 592-cysteine 603, cysteine 599-cysteine 612, and cysteine 614-cysteine 627. Positions 631-890 (EAFLLFSRRA…VFHSSRQSGW (260 aa)) are beta-propeller 3. LDL-receptor class B repeat units follow at residues 674 to 716 (NRIY…DWLG), 717 to 759 (KNLY…DPAE), 760 to 802 (GFMY…DYAK), 803 to 842 (RRLY…TQYQ), and 843 to 885 (DYIY…FHSS). A glycan (N-linked (GlcNAc...) asparagine) is linked at asparagine 692. N-linked (GlcNAc...) asparagine glycans are attached at residues asparagine 859 and asparagine 865. The EGF-like 3 domain occupies 889–930 (GWNECASSNGHCSHLCLAVPVGGFVCGCPAHYSLNADNRTCS). 3 cysteine pairs are disulfide-bonded: cysteine 893–cysteine 904, cysteine 900–cysteine 914, and cysteine 916–cysteine 929. Asparagine 926 carries an N-linked (GlcNAc...) asparagine glycan. Residues 933–1202 (TTFLLFSQKS…AVKELNLQEY (270 aa)) form a beta-propeller 4 region. LDL-receptor class B repeat units lie at residues 977–1025 (KQLY…DIYS), 1026–1068 (RYIY…NPEK), 1069–1113 (GYMY…DSRL), 1114–1156 (GKLF…FENW), and 1157–1198 (LYWI…KELN). The N-linked (GlcNAc...) asparagine glycan is linked to asparagine 1039. The EGF-like 4 domain maps to 1203 to 1244 (RQHPCAQDNGGCSHICLVKGDGTTRCSCPMHLVLLQDELSCG). Disulfide bonds link cysteine 1207–cysteine 1218, cysteine 1214–cysteine 1228, cysteine 1230–cysteine 1243, cysteine 1249–cysteine 1263, cysteine 1256–cysteine 1276, cysteine 1270–cysteine 1285, cysteine 1288–cysteine 1300, cysteine 1295–cysteine 1313, cysteine 1307–cysteine 1322, cysteine 1326–cysteine 1338, cysteine 1333–cysteine 1351, and cysteine 1345–cysteine 1360. 3 LDL-receptor class A domains span residues 1248–1286 (TCSP…LNCP), 1287–1323 (VCSE…KNCE), and 1325–1361 (LCLI…LDCY). A helical transmembrane segment spans residues 1371–1393 (TNTVGSVIGVIVTIFVSGTVYFI). 2 S-palmitoyl cysteine lipidation sites follow: cysteine 1394 and cysteine 1399. Topologically, residues 1394–1613 (CQRMLCPRMK…PPPSPCTDSS (220 aa)) are cytoplasmic. Lysine 1403 participates in a covalent cross-link: Glycyl lysine isopeptide (Lys-Gly) (interchain with G-Cter in ubiquitin). Phosphoserine; by CK1 is present on residues serine 1420 and serine 1430. Threonine 1479 carries the phosphothreonine modification. Positions 1487–1493 (PPPSPAT) match the PPPSP motif A motif. Residue serine 1490 is modified to Phosphoserine; by CDK14, GRK5 and GRK6. Threonine 1493 is subject to Phosphothreonine; by CK1. The PPPSP motif B motif lies at 1527–1534 (PPTTPCST). Residues 1556-1613 (YTSDLNYDSEPVPPPPTPRSQYLSAEENYESCPPSPYTERSYSHHLYPPPPSPCTDSS) are disordered. A PPPSP motif C motif is present at residues 1568–1575 (PPPPTPRS). Positions 1588–1593 (PPSPYT) match the PPPSP motif D motif. Pro residues predominate over residues 1602-1613 (YPPPPSPCTDSS). The PPPSP motif E signature appears at 1603–1610 (PPPPSPCT).

The protein belongs to the LDLR family. Homodimer; disulfide-linked. Forms phosphorylated oligomer aggregates on Wnt-signaling. Forms a WNT-signaling complex formed of a WNT protein, a FZD protein and LRP5 or LRP6. Interacts (via the extracellular domain) with WNT1; the interaction is enhanced by prior formation of the Wnt/Fzd complex. Interacts (via the beta-propeller regions 3 and 4) with WNT3A. Interacts (via the beta-propeller regions 1 and 2) with WNT9B. Interacts with FZD5; the interaction forms a coreceptor complex for Wnt signaling and is inhibited by DKK1 and DRAXIN. Interacts (via beta propeller region) with DKK1; the interaction inhibits FZD5/LRP6 complex formation. Interacts with DKK2. Interacts with C1orf187/DRAXIN; the interaction inhibits Wnt signaling. Interacts (via the phosphorylated PPPSP motifs) with AXIN1; the interaction recruits the AXIN1/GSK3B complex to cell surface LRP6 signalosomes. Interacts with GRB10; the interaction prevents AXIN1 binding, thus negatively regulating the Wnt signaling pathway. Interacts (via the extracellular domain) with RSPO1; the interaction activates Wnt/beta-catenin signaling. Interacts (via the extracellular domain) with RSPO3 (via the cysteine rich domain); the interaction activates Wnt/beta-catenin signaling. Interacts (via the beta-propeller regions 1 and 2) with SOST; the interaction competes with DKK1 for binding for inhibiting beta-catenin signaling. Interacts with MESD; the interaction prevents the formation of LRP6 aggregates and targets LRP6 to the plasma membrane. Interacts (via the cytoplasmic domain) with CSNKIE; the interaction phosphorylates LRP6, binds AXIN1 and inhibits AXIN1/GSK3B-mediated phosphorylation of beta-catenin. Interacts with MACF1. Interacts with DAB2; the interaction involves LRP6 phosphorylation by CK2 and sequesters LRP6 towards clathrin-mediated endocytosis. Interacts with TMEM198. Interacts with CAPRIN2; the interaction promotes LRP6 phosphorylation at Ser-1490. Found in a complex with CAPRIN2, CCNY and CDK14 during G2/M stage; CAPRIN2 functions as a scaffold for the complex by binding to CCNY via its N terminus and to CDK14 via its C terminus. Interacts with LYPD6 (via NxI motif). Forms a ternary complex with DKK1 and KREM1. Interacts with KREM1 in a DKK1-dependent manner. Interacts with MDK: this interaction is calcium dependent. Interacts with LMBR1L. Interacts with GPR37; this interaction promotes LRP6 maturation. In terms of processing, dual phosphorylation of cytoplasmic PPPSP motifs sequentially by GSK3 and CK1 is required for AXIN1-binding, and subsequent stabilization and activation of beta-catenin via preventing GSK3-mediated phosphorylation of beta-catenin. Phosphorylated, in vitro, by GRK5/6 within and outside the PPPSP motifs. Phosphorylation at Ser-1490 by CDK14 during G2/M phase leads to regulation of the Wnt signaling pathway during the cell cycle. Phosphorylation by GSK3B is induced by RPSO1 binding and inhibited by DKK1. Phosphorylated, in vitro, by casein kinase I on Thr-1479. Undergoes gamma-secretase-dependent regulated intramembrane proteolysis (RIP). The extracellular domain is first released by shedding, and then, through the action of gamma-secretase, the intracellular domain (ICD) is released into the cytoplasm where it is free to bind to GSK3B and to activate canonical Wnt signaling. Post-translationally, palmitoylation on the two sites near the transmembrane domain leads to release of LRP6 from the endoplasmic reticulum. In terms of processing, mono-ubiquitinated which retains LRP6 in the endoplasmic reticulum. Ubiquitinated by ZNRF3, leading to its degradation by the proteasome. N-glycosylation is required for cell surface location. Widely coexpressed with LRP5 during embryogenesis and in adult tissues.

The protein localises to the cell membrane. It is found in the endoplasmic reticulum. The protein resides in the membrane raft. In terms of biological role, component of the Wnt-Fzd-LRP5-LRP6 complex that triggers beta-catenin signaling through inducing aggregation of receptor-ligand complexes into ribosome-sized signalosomes. Cell-surface coreceptor of Wnt/beta-catenin signaling, which plays a pivotal role in bone formation. The Wnt-induced Fzd/LRP6 coreceptor complex recruits DVL1 polymers to the plasma membrane which, in turn, recruits the AXIN1/GSK3B-complex to the cell surface promoting the formation of signalosomes and inhibiting AXIN1/GSK3-mediated phosphorylation and destruction of beta-catenin. Required for posterior patterning of the epiblast during gastrulation. The sequence is that of Low-density lipoprotein receptor-related protein 6 (LRP6) from Homo sapiens (Human).